Here is a 963-residue protein sequence, read N- to C-terminus: MAAQCESIGGDMNQSDPGSNSERSADSPVPGSEDDSPHDPEWREERFRVDRKKLETMLQAAAEGKGKSGEDFFQKIMEETNTQIAWPSKLKIGAKSKKDPHIKVSGKKENVKEAKERIMSVLDTKSNRVTLKMDVLHTEHSHVIGKGGNNIKKVMEETGCHIHFPDSNRNNQAEKSNQVSIAGQPAGVESARVRIRELLPLVLMFELPIAGILQPIPDPNSPTIQQISQTYNLTVSFKQRSRVYGATVIVRGSQNNTSAVKEGTAMLLEHLAGSLATAIPVSTQLDIAAQHHLFMMGRNGCNIKHIMQRTGAQIHFPDPNNPLKKSTVYLQGTIDSVCLARQYLMGCLPLVLMFDMKEEIEIEPQCITQLMEQLDVFISIKPKPKQPSKSVIVKSVERNALNMYEARKCLLGLDSSGVTVTNQSTLSCPVPMNCHGLDILAAGLGLSGLGLLGPNTLSVNSTTAQNSLLNALNSSLSPLHSPSSAAPSPTLWAASLANNATGFSAIPHLMIPSAAQATLTNFLLSGVPNYGQNTPSPPPGLTPVDVHMNGIHSECKKVTSALNGHVKPTNMKYGTISSSSLGDKVLNTNLAEASRQSNNHSSAEEVNSKTDPEGCNDAFVEVGMPRSPSHSANTKDLKQMLNSTKAPCPTRQTVKLLHGTKNSHLHGERLLSDSEMSPMEGPVTDKKAPGSERAAERAAAQQNSERARLTSQSEYGTMQAYDYEQKKLLATKAMLKKPVVTEVRTPTNTWSGLGFSKSTPAETIKELRRANHVPYKPTMTTTYENSSLSRSNSREQLGNGSDSENWRERNGIDSSQNDYSSSIGSPKRKQNKSAEHYLSSSNYMDCISSLTGSNGCNLNSSFKGSDLPELFSKLGLGKYTDIFQQQEIDLQTFLTLTDQDLKELGISTFGARRKMLLAISELNKNRRKLFEPTNIRASFLEGGASGRLPRQYHTDIASVSGRW.

The disordered stretch occupies residues 1–48 (MAAQCESIGGDMNQSDPGSNSERSADSPVPGSEDDSPHDPEWREERFR). Residues 12 to 22 (MNQSDPGSNSE) are compositionally biased toward polar residues. Positions 35-48 (DSPHDPEWREERFR) are enriched in basic and acidic residues. KH domains lie at 128 to 195 (RVTL…RVRI) and 280 to 344 (PVST…RQYL). Positions 592 to 601 (EASRQSNNHS) are enriched in polar residues. 3 disordered regions span residues 592 to 613 (EASR…TDPE), 668 to 713 (ERLL…TSQS), and 767 to 834 (LRRA…NKSA). 2 stretches are compositionally biased toward basic and acidic residues: residues 602 to 612 (SAEEVNSKTDP) and 683 to 696 (VTDK…RAAE). The span at 784 to 797 (ENSSLSRSNSREQL) shows a compositional bias: low complexity. Residues 812–824 (IDSSQNDYSSSIG) are compositionally biased toward polar residues. The SAM domain occupies 862–925 (FKGSDLPELF…LLAISELNKN (64 aa)).

It belongs to the BicC family.

Its function is as follows. Putative RNA-binding protein. May be involved in regulating gene expression during embryonic development. Seems to be involved in endoderm formation. Ectopic expression results in endoderm formation in the absence of mesoderm induction. The protein is Protein bicaudal C homolog 1-A (bicc1-a) of Xenopus laevis (African clawed frog).